We begin with the raw amino-acid sequence, 714 residues long: ATP-dependent DNA helicase DinG (714 aa).

The region spanning 17–294 (ALQDQIPDFI…TCMEQFRPKT (278 aa)) is the Helicase ATP-binding domain. 54–61 (APTGVGKT) lines the ATP pocket. [4Fe-4S] cluster-binding residues include Cys120, Cys194, Cys199, and Cys205. Positions 248–251 (DEGH) match the DEAH box motif. The Helicase C-terminal domain occupies 517–698 (HIAEMAAYFR…VFPIEQPAVP (182 aa)).

This sequence belongs to the helicase family. DinG subfamily. Type 1 sub-subfamily. [4Fe-4S] cluster is required as a cofactor.

It carries out the reaction Couples ATP hydrolysis with the unwinding of duplex DNA at the replication fork by translocating in the 5'-3' direction. This creates two antiparallel DNA single strands (ssDNA). The leading ssDNA polymer is the template for DNA polymerase III holoenzyme which synthesizes a continuous strand.. It catalyses the reaction ATP + H2O = ADP + phosphate + H(+). Its function is as follows. DNA-dependent ATPase and 5'-3' DNA helicase. Unwinds D-loops, R-loops, forked DNA and G-quadruplex DNA. The polypeptide is ATP-dependent DNA helicase DinG (Salmonella typhimurium (strain LT2 / SGSC1412 / ATCC 700720)).